Consider the following 257-residue polypeptide: 5-oxoprolinase subunit A (257 aa).

This sequence belongs to the LamB/PxpA family. In terms of assembly, forms a complex composed of PxpA, PxpB and PxpC.

It catalyses the reaction 5-oxo-L-proline + ATP + 2 H2O = L-glutamate + ADP + phosphate + H(+). In terms of biological role, catalyzes the cleavage of 5-oxoproline to form L-glutamate coupled to the hydrolysis of ATP to ADP and inorganic phosphate. This chain is 5-oxoprolinase subunit A, found in Bacillus subtilis (strain 168).